Here is an 89-residue protein sequence, read N- to C-terminus: Small ribosomal subunit protein uS14 (89 aa).

It belongs to the universal ribosomal protein uS14 family. As to quaternary structure, part of the 30S ribosomal subunit. Contacts proteins S3 and S10.

Functionally, binds 16S rRNA, required for the assembly of 30S particles and may also be responsible for determining the conformation of the 16S rRNA at the A site. In Parabacteroides distasonis (strain ATCC 8503 / DSM 20701 / CIP 104284 / JCM 5825 / NCTC 11152), this protein is Small ribosomal subunit protein uS14.